A 199-amino-acid polypeptide reads, in one-letter code: Recombination protein RecR (199 aa).

The C4-type zinc finger occupies 57-72 (CQSCRTFTEQSLCPIC). The Toprim domain occupies 81–176 (GVICVVETPA…IISRIAHGVP (96 aa)).

This sequence belongs to the RecR family.

May play a role in DNA repair. It seems to be involved in an RecBC-independent recombinational process of DNA repair. It may act with RecF and RecO. The sequence is that of Recombination protein RecR from Shewanella denitrificans (strain OS217 / ATCC BAA-1090 / DSM 15013).